We begin with the raw amino-acid sequence, 179 residues long: Repressor of phase 1 flagellin gene (179 aa).

Functionally, transcriptional repressor of the FliC phase-1 flagellin. This chain is Repressor of phase 1 flagellin gene (fljA), found in Salmonella typhimurium (strain LT2 / SGSC1412 / ATCC 700720).